We begin with the raw amino-acid sequence, 200 residues long: MASFDGQGFMMVDNSWVQTKAIDVESTTDISPYLSKILEDSVWNGNRSIVFDVYWDVKSVSTKSEWRLCSVKFSTKNFCLFLRLPNPFCDNLKDLYRFFASKFVTFVGVQIQEDLALLKENHGIVIRSSLEIGKLAAKARGTPIVEFLGTRELAHKILWYDMSRLDSIQSKWDEASSNDRLEAAAIEGWLIFNVYDQLQQ.

Oligomerization stretches follow at residues 35–66 (SKILEDSVWNGNRSIVFDVYWDVKSVSTKSEW), 102–127 (KFVTFVGVQIQEDLALLKENHGIVIR), and 166–173 (DSIQSKWD).

It belongs to the RICE family. Homohexamer with DnaQ-like exonuclease fold in a ring-shaped structure with a central cavity. Component of AGO1 and AGO10-centered RNA-induced silencing complexes (RISC). Interacts with and acts as a cofactor of AGO1 and AGO10. As to expression, ubiquitously expressed throughout development in germinating seeds, cotyledons, leaves and roots of young seedlings and adult plants, stems and inflorescence.

The protein resides in the cytoplasm. It carries out the reaction Exonucleolytic cleavage in the 3'- to 5'-direction to yield nucleoside 5'-phosphates.. 3'-to-5' exoribonuclease (RNase) specifically targeting single-stranded RNAs. Triggers miRNA accumulation in RNA-induced silencing complex (RISC), composed of miRNAs and AGO proteins, by degrading uridylated cleavage fragments. Required during plant growth and development. In Arabidopsis thaliana (Mouse-ear cress), this protein is Protein RISC-INTERACTING CLEARING 3'-5' EXORIBONUCLEASE 1.